Reading from the N-terminus, the 362-residue chain is Cobalt-precorrin-5B C(1)-methyltransferase (362 aa).

Belongs to the CbiD family.

The enzyme catalyses Co-precorrin-5B + S-adenosyl-L-methionine = Co-precorrin-6A + S-adenosyl-L-homocysteine. It participates in cofactor biosynthesis; adenosylcobalamin biosynthesis; cob(II)yrinate a,c-diamide from sirohydrochlorin (anaerobic route): step 6/10. Functionally, catalyzes the methylation of C-1 in cobalt-precorrin-5B to form cobalt-precorrin-6A. The protein is Cobalt-precorrin-5B C(1)-methyltransferase of Burkholderia cenocepacia (strain ATCC BAA-245 / DSM 16553 / LMG 16656 / NCTC 13227 / J2315 / CF5610) (Burkholderia cepacia (strain J2315)).